A 244-amino-acid polypeptide reads, in one-letter code: uncharacterized protein (244 aa).

The N-terminal stretch at 1–17 (MVLHVITALLSIGLCYG) is a signal peptide.

In terms of tissue distribution, component of the acid-soluble and acid-insoluble organic matrix of prismatic shell layers (at protein level).

It localises to the secreted. This is an uncharacterized protein from Haliotis asinina (Donkey's ear abalone).